The primary structure comprises 378 residues: Glutamate 5-kinase 1 (378 aa).

Residue Lys-13 coordinates ATP. Substrate-binding residues include Ser-53, Asp-140, and Asn-152. 172 to 173 lines the ATP pocket; the sequence is SD. One can recognise a PUA domain in the interval 278-355; that stretch reads AGRLTVDAGA…AEIETVLGYE (78 aa).

It belongs to the glutamate 5-kinase family.

Its subcellular location is the cytoplasm. It catalyses the reaction L-glutamate + ATP = L-glutamyl 5-phosphate + ADP. It functions in the pathway amino-acid biosynthesis; L-proline biosynthesis; L-glutamate 5-semialdehyde from L-glutamate: step 1/2. In terms of biological role, catalyzes the transfer of a phosphate group to glutamate to form L-glutamate 5-phosphate. This is Glutamate 5-kinase 1 from Mesorhizobium japonicum (strain LMG 29417 / CECT 9101 / MAFF 303099) (Mesorhizobium loti (strain MAFF 303099)).